The primary structure comprises 562 residues: Phosphoglucomutase-1 (562 aa).

Met1 is modified (N-acetylmethionine). At Lys16 the chain carries N6-acetyllysine. Arg23 is an alpha-D-glucose 1,6-bisphosphate binding site. At Thr115 the chain carries Phosphothreonine. Residue Ser117 participates in alpha-D-glucose 1,6-bisphosphate binding. Ser117 serves as the catalytic Phosphoserine intermediate. Ser117 lines the Mg(2+) pocket. Phosphoserine is present on residues Ser117 and Ser134. Residue Thr185 is modified to Phosphothreonine. Residues Ser206 and Ser213 each carry the phosphoserine modification. Asp288, Asp290, and Asp292 together coordinate Mg(2+). Residues Asp292 and Arg293 each coordinate alpha-D-glucose 1,6-bisphosphate. At Lys349 the chain carries N6-acetyllysine. Tyr353 carries the post-translational modification Phosphotyrosine. Thr357 serves as a coordination point for alpha-D-glucose 1,6-bisphosphate. Ser369 carries the phosphoserine modification. Residues Glu376, Ser378, and Lys389 each coordinate alpha-D-glucose 1,6-bisphosphate. A Phosphoserine modification is found at Ser378. Lys419 is subject to N6-succinyllysine. Thr467 is modified (phosphothreonine; by PAK1). Residues Ser477, Ser485, and Ser505 each carry the phosphoserine modification. The residue at position 507 (Thr507) is a Phosphothreonine. A phosphoserine mark is found at Ser509 and Ser541.

This sequence belongs to the phosphohexose mutase family. As to quaternary structure, monomer. Requires Mg(2+) as cofactor. Post-translationally, phosphorylation at Thr-467 by PAK1 significantly enhances enzymatic activity.

It is found in the cytoplasm. The catalysed reaction is alpha-D-glucose 1-phosphate = alpha-D-glucose 6-phosphate. It carries out the reaction O-phospho-L-seryl-[protein] + alpha-D-glucose 1-phosphate = alpha-D-glucose 1,6-bisphosphate + L-seryl-[protein]. The enzyme catalyses alpha-D-glucose 1,6-bisphosphate + L-seryl-[protein] = O-phospho-L-seryl-[protein] + alpha-D-glucose 6-phosphate. Its function is as follows. Catalyzes the reversible isomerization of alpha-D-glucose 1-phosphate to alpha-D-glucose 6-phosphate. The mechanism proceeds via the intermediate compound alpha-D-glucose 1,6-bisphosphate. This enzyme participates in both the breakdown and synthesis of glucose. This chain is Phosphoglucomutase-1 (PGM1), found in Macaca fascicularis (Crab-eating macaque).